Reading from the N-terminus, the 77-residue chain is Acyl carrier protein (77 aa).

The Carrier domain maps to 1–76 (MAVFDDVRDV…DVVNYIEKLG (76 aa)). Position 36 is an O-(pantetheine 4'-phosphoryl)serine (Ser-36).

Belongs to the acyl carrier protein (ACP) family. 4'-phosphopantetheine is transferred from CoA to a specific serine of apo-ACP by AcpS. This modification is essential for activity because fatty acids are bound in thioester linkage to the sulfhydryl of the prosthetic group.

It is found in the cytoplasm. It participates in lipid metabolism; fatty acid biosynthesis. Carrier of the growing fatty acid chain in fatty acid biosynthesis. In Campylobacter curvus (strain 525.92), this protein is Acyl carrier protein.